Here is a 345-residue protein sequence, read N- to C-terminus: Dihydroorotase (345 aa).

Residues histidine 14 and histidine 16 each contribute to the Zn(2+) site. Residues histidine 16–arginine 18 and asparagine 42 contribute to the substrate site. Zn(2+) is bound by residues lysine 100, histidine 137, and histidine 175. The residue at position 100 (lysine 100) is an N6-carboxylysine. Histidine 137 contacts substrate. Position 220 (leucine 220) interacts with substrate. Residue aspartate 248 coordinates Zn(2+). The active site involves aspartate 248. Residues histidine 252 and alanine 264 each contribute to the substrate site.

The protein belongs to the metallo-dependent hydrolases superfamily. DHOase family. Class II DHOase subfamily. Homodimer. The cofactor is Zn(2+).

The enzyme catalyses (S)-dihydroorotate + H2O = N-carbamoyl-L-aspartate + H(+). It functions in the pathway pyrimidine metabolism; UMP biosynthesis via de novo pathway; (S)-dihydroorotate from bicarbonate: step 3/3. Catalyzes the reversible cyclization of carbamoyl aspartate to dihydroorotate. The protein is Dihydroorotase of Methylobacillus flagellatus (strain ATCC 51484 / DSM 6875 / VKM B-1610 / KT).